The following is a 147-amino-acid chain: Large ribosomal subunit protein bL9 (147 aa).

Belongs to the bacterial ribosomal protein bL9 family.

Functionally, binds to the 23S rRNA. This chain is Large ribosomal subunit protein bL9, found in Nitratiruptor sp. (strain SB155-2).